We begin with the raw amino-acid sequence, 503 residues long: Cytochrome P450 7A1 (503 aa).

Residues 4-24 (ISLIWGIAVVVSCCIWFIIGI) form a helical membrane-spanning segment. C444 serves as a coordination point for heme.

Belongs to the cytochrome P450 family. It depends on heme as a cofactor.

The protein localises to the endoplasmic reticulum membrane. It localises to the microsome membrane. The enzyme catalyses cholesterol + reduced [NADPH--hemoprotein reductase] + O2 = 7alpha-hydroxycholesterol + oxidized [NADPH--hemoprotein reductase] + H2O + H(+). The catalysed reaction is 4beta-hydroxycholesterol + reduced [NADPH--hemoprotein reductase] + O2 = 4beta,7alpha-dihydroxycholesterol + oxidized [NADPH--hemoprotein reductase] + H2O + H(+). It catalyses the reaction lathosterol + reduced [NADPH--hemoprotein reductase] + O2 = 7alpha,8alpha-epoxy-5alpha-cholestan-3beta-ol + oxidized [NADPH--hemoprotein reductase] + H2O + H(+). It carries out the reaction lathosterol + reduced [NADPH--hemoprotein reductase] + O2 = 5alpha-cholestan-7-oxo-3beta-ol + oxidized [NADPH--hemoprotein reductase] + H2O + H(+). The enzyme catalyses 7-dehydrocholesterol + reduced [NADPH--hemoprotein reductase] + O2 = 7-oxocholesterol + oxidized [NADPH--hemoprotein reductase] + H2O + H(+). The catalysed reaction is (24S)-hydroxycholesterol + reduced [NADPH--hemoprotein reductase] + O2 = (24S)-7alpha-dihydroxycholesterol + oxidized [NADPH--hemoprotein reductase] + H2O + H(+). It catalyses the reaction (24R)-hydroxycholesterol + reduced [NADPH--hemoprotein reductase] + O2 = (24R)-7alpha-dihydroxycholesterol + oxidized [NADPH--hemoprotein reductase] + H2O + H(+). The protein operates within lipid metabolism; bile acid biosynthesis. It participates in steroid metabolism; cholesterol degradation. Its function is as follows. A cytochrome P450 monooxygenase involved in the metabolism of endogenous cholesterol and its oxygenated derivatives (oxysterols). Mechanistically, uses molecular oxygen inserting one oxygen atom into a substrate, and reducing the second into a water molecule, with two electrons provided by NADPH via cytochrome P450 reductase (CPR; NADPH-ferrihemoprotein reductase). Functions as a critical regulatory enzyme of bile acid biosynthesis and cholesterol homeostasis. Catalyzes the hydroxylation of carbon hydrogen bond at 7-alpha position of cholesterol, a rate-limiting step in cholesterol catabolism and bile acid biosynthesis. 7-alpha hydroxylates several oxysterols, including 4beta-hydroxycholesterol and 24-hydroxycholesterol. Catalyzes the oxidation of the 7,8 double bond of 7-dehydrocholesterol and lathosterol with direct and predominant formation of the 7-keto derivatives. In Mus musculus (Mouse), this protein is Cytochrome P450 7A1.